The following is a 766-amino-acid chain: Slit homolog 2 protein (766 aa).

The first 30 residues, 1–30 (MSGIGWQTLSLSLALVLSILNKVAPHACPA), serve as a signal peptide directing secretion. The 25-residue stretch at 31–55 (QCSCSGSTVDCHGLALRIVPRNIPR) folds into the LRRNT domain. LRR repeat units lie at residues 56–77 (NTER…DFAG), 80–101 (HLRI…AFHD), 104–125 (ELER…LFLG), 128–149 (KLYR…AFRG), 152–173 (DIKN…AFRA), and 176–197 (DLEV…SFNH). N-linked (GlcNAc...) asparagine glycosylation occurs at Asn66. N-linked (GlcNAc...) asparagine glycosylation occurs at Asn186. The region spanning 209-259 (NNLYCDCHLAWLSDWLRQRPRVGLYTQCMGPSHLRGHNVAEVQKREFVCSD) is the LRRCT 1 domain. In terms of domain architecture, LRRNT 2 spans 268–304 (MAPSCSVLHCPIACTCSNNIVDCRGKGLTEIPTNLPE). Cysteines 281 and 290 form a disulfide. LRR repeat units lie at residues 305-326 (TITE…AFSP), 329-350 (KLRR…AFQG), 353-374 (SLNS…LFEG), 377-398 (SLQL…AFQD), and 401-422 (NLNL…TFSA). One can recognise an LRRCT 2 domain in the interval 434–484 (NPFICDCHLKWLADYLHTNPIETSGARCTSPRRLANKRIGQIKSKKFRCSG). Disulfide bonds link Cys438/Cys461, Cys440/Cys482, Cys502/Cys508, and Cys506/Cys515. The 37-residue stretch at 493 to 529 (SGDCFADLACPEKCRCEGTTVDCSNQKLNKIPDHIPQ) folds into the LRRNT 3 domain. 5 LRR repeats span residues 530 to 551 (YTAE…GIFK), 555 to 576 (QLRK…AFEG), 579 to 600 (GVNE…MFKG), 603 to 624 (SLKT…SFTG), and 627 to 648 (SVRL…AFGT). Asn560 is a glycosylation site (N-linked (GlcNAc...) asparagine). N-linked (GlcNAc...) asparagine glycosylation is present at Asn619. An LRRCT 3 domain is found at 660 to 710 (NPFNCNCHLAWLGEWLRRKRIVTGNPRCQKPYFLKEIPIQDVAIQDFTCDD). Disulfide bonds link Cys664-Cys687, Cys666-Cys708, Cys723-Cys729, and Cys727-Cys736. Residues 714 to 750 (DNSCSPLSRCPSECTCLDTVVRCSNKGLKVLPKGIPR) form the LRRNT 4 domain.

Homodimer. Binds ROBO1 and ROBO2 with high affinity. Interacts with GREM1.

Its subcellular location is the secreted. Functionally, thought to act as molecular guidance cue in cellular migration, and function appears to be mediated by interaction with roundabout homolog receptors. During neural development involved in axonal navigation at the ventral midline of the neural tube and projection of axons to different regions. SLIT1 and SLIT2 seem to be essential for midline guidance in the forebrain by acting as repulsive signal preventing inappropriate midline crossing by axons projecting from the olfactory bulb. In spinal cord development may play a role in guiding commissural axons once they reached the floor plate by modulating the response to netrin. In vitro, silences the attractive effect of NTN1 but not its growth-stimulatory effect and silencing requires the formation of a ROBO1-DCC complex. May be implicated in spinal cord midline post-crossing axon repulsion. In vitro, only commissural axons that crossed the midline responded to SLIT2. In the developing visual system appears to function as repellent for retinal ganglion axons by providing a repulsion that directs these axons along their appropriate paths prior to, and after passage through, the optic chiasm. In vitro, collapses and repels retinal ganglion cell growth cones. Seems to play a role in branching and arborization of CNS sensory axons, and in neuronal cell migration. Seems to be involved in regulating leukocyte migration. The polypeptide is Slit homolog 2 protein (Slit2) (Rattus norvegicus (Rat)).